The chain runs to 76 residues: UPF0291 protein BPUM_1689 (76 aa).

2 disordered regions span residues 1–31 (MISK…TEQK) and 56–76 (DPEG…QNLH). Composition is skewed to basic and acidic residues over residues 12-31 (ELSK…TEQK) and 63-76 (TPEK…QNLH).

It belongs to the UPF0291 family.

The protein localises to the cytoplasm. The sequence is that of UPF0291 protein BPUM_1689 from Bacillus pumilus (strain SAFR-032).